The sequence spans 578 residues: Arginine--tRNA ligase (578 aa).

The 'HIGH' region signature appears at Pro-127–His-137.

This sequence belongs to the class-I aminoacyl-tRNA synthetase family. Monomer.

It is found in the cytoplasm. The enzyme catalyses tRNA(Arg) + L-arginine + ATP = L-arginyl-tRNA(Arg) + AMP + diphosphate. The chain is Arginine--tRNA ligase from Pseudomonas fluorescens (strain ATCC BAA-477 / NRRL B-23932 / Pf-5).